The primary structure comprises 292 residues: Transforming growth factor-beta receptor type 3-like protein (292 aa).

The first 16 residues, 1–16 (MLGTVLLLALLPGITT), serve as a signal peptide directing secretion. The ZP; truncated domain occupies 17–170 (LPSGPPAPPF…APAPLTPPPP (154 aa)). The Extracellular segment spans residues 17-244 (LPSGPPAPPF…PAPAALEPAP (228 aa)). Cysteines 85 and 147 form a disulfide. Residues 160 to 236 (RAPAPLTPPP…AVRPEPPAPA (77 aa)) form a disordered region. Composition is skewed to pro residues over residues 164 to 175 (PLTPPPPPPPSR) and 213 to 222 (PRPPPRPPKS). The helical transmembrane segment at 245 to 265 (VVALVLAAFVLGAALAAGLGL) threads the bilayer. Over 266 to 292 (VCAHSAPHAPGPPARASPSGPQPRRSQ) the chain is Cytoplasmic. The tract at residues 273 to 292 (HAPGPPARASPSGPQPRRSQ) is disordered. Over residues 281 to 292 (ASPSGPQPRRSQ) the composition is skewed to low complexity.

In terms of processing, glycosylated. Expressed in pituitary gland gonadotrope cells.

The protein localises to the cell membrane. Its function is as follows. Expressed in gonadotrope cells, acts as an inhibin B coreceptor and regulates follicle-stimulating hormone (FSH) levels and female fertility. In Homo sapiens (Human), this protein is Transforming growth factor-beta receptor type 3-like protein.